A 327-amino-acid chain; its full sequence is MQQLTEIVEQALVIIDQASDLKALDDIRVDYLGKKGKITDMMKMMGSLSPEEKPAFGQAVNDAKQAIQQKLTERIDGLKSAELEAKLIAEKIDVTLPGRTIEIGGLHPVTRTIERIETFFGELGFSVKQGPEIEDDFHNFDALNISEHHPARADHDTFYFNPKLMLRTQTSGVQIRTMETEKPPLRIISPGRVYRNDYDQTHTPMFHQVEGLLVDEHVNFAELKGVLHDFLRNFFEEDLQVRFRPSYFPFTEPSAEVDVMGKNGKWLEVLGCGMVHPNVLRSVGIDPEKYSGFAFGMGVERLTMLRYGVNDLRAFFENDLRFLKQFK.

Mg(2+) is bound at residue Glu252.

It belongs to the class-II aminoacyl-tRNA synthetase family. Phe-tRNA synthetase alpha subunit type 1 subfamily. In terms of assembly, tetramer of two alpha and two beta subunits. Mg(2+) is required as a cofactor.

The protein localises to the cytoplasm. The enzyme catalyses tRNA(Phe) + L-phenylalanine + ATP = L-phenylalanyl-tRNA(Phe) + AMP + diphosphate + H(+). This Shewanella oneidensis (strain ATCC 700550 / JCM 31522 / CIP 106686 / LMG 19005 / NCIMB 14063 / MR-1) protein is Phenylalanine--tRNA ligase alpha subunit.